A 218-amino-acid polypeptide reads, in one-letter code: Flagellin B1 (218 aa).

Positions 1–12 (MNIKEFLSNKKG) are excised as a propeptide. N38, N71, N77, N115, and N136 each carry an N-linked (GlcNAc...) asparagine glycan.

The protein belongs to the archaeal flagellin family. In terms of processing, N-linked glycans consist of the 779 Da trisaccharide beta-ManNAc(Thr)-(1-4)-beta-GlcNAc3NAcA-(1-3)-beta-GlcNAc.

It is found in the archaeal flagellum. Flagellin is the subunit protein which polymerizes to form the filaments of archaeal flagella. In Methanococcus voltae, this protein is Flagellin B1 (flaB1).